The following is a 200-amino-acid chain: MARCKS-related protein (200 aa).

The disordered stretch occupies residues 1–200 (MGSQSSKAPR…PTPASAEQNE (200 aa)). Residue glycine 2 is the site of N-myristoyl glycine attachment. Threonine 14 carries the post-translational modification Phosphothreonine. The segment covering 16 to 26 (EEAAGASPAKA) has biased composition (low complexity). Phosphoserine is present on residues serine 22, serine 36, and serine 48. Low complexity predominate over residues 53–64 (GTDEAAGATGDA). The residue at position 71 (serine 71) is a Phosphoserine. Over residues 74 to 85 (AEAKGEVAPKET) the composition is skewed to basic and acidic residues. At threonine 85 the chain carries Phosphothreonine. The span at 86 to 98 (PKKKKKFSFKKPF) shows a compositional bias: basic residues. The interval 87-110 (KKKKKFSFKKPFKLSGLSFKRNRK) is effector domain involved in lipid-binding and calmodulin-binding. A phosphoserine; by PKC mark is found at serine 93, serine 101, and serine 104. Position 119 is a phosphoserine (serine 119). Serine 120 bears the Phosphoserine; by MAPK8 mark. Phosphoserine occurs at positions 132 and 135. At threonine 148 the chain carries Phosphothreonine; by MAPK8. Phosphoserine is present on residues serine 151, serine 162, and serine 165. Positions 156–165 (AKGAEASAAS) are enriched in low complexity. At threonine 170 the chain carries Phosphothreonine. Residues 178-200 (AAEPSTPSGPESGPTPASAEQNE) show a composition bias toward low complexity. At threonine 183 the chain carries Phosphothreonine; by MAPK8. Threonine 192 is subject to Phosphothreonine.

The protein belongs to the MARCKS family. As to quaternary structure, binds to filamentous actin (F-actin), but not to monomeric G-actin, independently of its phosphorylation status. Interacts with calmodulin. In terms of processing, phosphorylated. Phosphorylation at Ser-120 and Thr-183 is non-redundantly catalyzed by MAPK8 in vivo. Phosphorylation at Thr-148 is preferentially catalyzed by MAPK8 in vivo, but this modification can also be catalyzed by other kinases in the absence of MAPK8. May be phosphorylated by protein kinase C, which disrupts the interaction with calmodulin. In terms of tissue distribution, expressed at high levels in brain cortex and hippocampus, including dentate gyrus, anterior olfactory nucleus, primary olfactory cortex, entorhinal cortex, medial preoptic area and dorsomedial hypothalamic nucleus (at protein level). Expressed in neuronal cells (at protein level). Detected in the retina. Strongly expressed in testis and uterus; expressed at lower levels in cerebellum, cerebrum, adipose tissue, spleen, kidney, thyroid, liver, lung, skeletal muscle and heart. Detected in T-cells and B-cells.

It localises to the cytoplasm. The protein resides in the cytoskeleton. The protein localises to the cell membrane. Its function is as follows. Involved in the control of cell movement by regulating actin cytoskeleton homeostasis and filopodium and lamellipodium formation. When unphosphorylated, induces cell migration. When phosphorylated by MAPK8, induces actin bundles formation and stabilization, thereby reducing actin plasticity, hence restricting cell movement, including neuronal migration. May be involved in coupling the protein kinase C and calmodulin signal transduction systems. The chain is MARCKS-related protein (Marcksl1) from Mus musculus (Mouse).